The sequence spans 219 residues: Small ribosomal subunit protein uS5 (219 aa).

Residues 1–21 (MTDQNQKANQGNGLQTTNLQA) show a composition bias toward polar residues. The tract at residues 1–61 (MTDQNQKANQ…NQNRRFQKPA (61 aa)) is disordered. A compositionally biased stretch (basic and acidic residues) spans 35 to 47 (GIKKAVSKKEGGG). The region spanning 66–129 (FEERIVKLKR…KAAHNSLHTI (64 aa)) is the S5 DRBM domain.

The protein belongs to the universal ribosomal protein uS5 family. Part of the 30S ribosomal subunit. Contacts proteins S4 and S8.

With S4 and S12 plays an important role in translational accuracy. Functionally, located at the back of the 30S subunit body where it stabilizes the conformation of the head with respect to the body. The chain is Small ribosomal subunit protein uS5 from Mycoplasma pneumoniae (strain ATCC 29342 / M129 / Subtype 1) (Mycoplasmoides pneumoniae).